Consider the following 320-residue polypeptide: Mitochondrial oxaloacetate transport protein (320 aa).

Solcar repeat units lie at residues 21-114, 126-218, and 227-313; these read LGPV…IRRT, NKLA…AKRM, and EGMI…TNKL. 6 consecutive transmembrane segments (helical) span residues 26-47, 91-111, 129-145, 197-217, 233-253, and 285-306; these read GFLS…FEVI, GTAY…YEPI, AINV…GALF, AILR…WAKR, LTAS…FDTV, and LYKG…CLTF.

Belongs to the mitochondrial carrier (TC 2.A.29) family.

It localises to the mitochondrion inner membrane. It carries out the reaction a dicarboxylate(in) + sulfate(out) = a dicarboxylate(out) + sulfate(in). It catalyses the reaction (2S)-2-isopropylmalate(in) + sulfate(out) = (2S)-2-isopropylmalate(out) + sulfate(in). The catalysed reaction is (2R,3S)-3-isopropylmalate(in) + sulfate(out) = (2R,3S)-3-isopropylmalate(out) + sulfate(in). The enzyme catalyses malonate(in) + sulfate(out) = malonate(out) + sulfate(in). It carries out the reaction oxaloacetate(in) + sulfate(out) = oxaloacetate(out) + sulfate(in). It catalyses the reaction thiosulfate(in) + sulfate(out) = thiosulfate(out) + sulfate(in). Antiporter that exchanges dicarboxylates and sulfur oxoanions across the inner membrane of mitochondria. Exports alpha-isopropylmalate from mitochondrial matrix to the cytosol, where it serves as a precursor for leucine biosynthesis. This is Mitochondrial oxaloacetate transport protein (oac1) from Schizosaccharomyces pombe (strain 972 / ATCC 24843) (Fission yeast).